Consider the following 209-residue polypeptide: Ubiquinone biosynthesis protein COQ4 homolog 2, mitochondrial (209 aa).

The Zn(2+) site is built by H118, D119, H122, and E134.

Belongs to the COQ4 family. As to quaternary structure, component of a multi-subunit COQ enzyme complex. Requires Zn(2+) as cofactor.

The protein resides in the mitochondrion inner membrane. It catalyses the reaction a 4-hydroxy-3-methoxy-5-(all-trans-polyprenyl)benzoate + H(+) = a 2-methoxy-6-(all-trans-polyprenyl)phenol + CO2. The protein operates within cofactor biosynthesis; ubiquinone biosynthesis. Functionally, lyase that catalyzes the C1-decarboxylation of 4-hydroxy-3-methoxy-5-(all-trans-polyprenyl)benzoic acid into 2-methoxy-6-(all-trans-polyprenyl)phenol during ubiquinone biosynthesis. The polypeptide is Ubiquinone biosynthesis protein COQ4 homolog 2, mitochondrial (Paramecium tetraurelia).